We begin with the raw amino-acid sequence, 507 residues long: RNA demethylase ALKBH9B (507 aa).

Disordered stretches follow at residues 76–102 (GSER…DNHS) and 145–183 (QEDE…LSRD). Residues 89 to 100 (DEKSENGEDCDN) are compositionally biased toward basic and acidic residues. Positions 145 to 160 (QEDEFDEEEEEEEEER) are enriched in acidic residues. Residues 174 to 183 (TPEKPKLSRD) are compositionally biased toward basic and acidic residues. The 98-residue stretch at 317 to 414 (VPDSCIVNIY…RISITFRKMD (98 aa)) folds into the Fe2OG dioxygenase domain. Fe cation-binding residues include His-335, Asp-337, and His-396. 2-oxoglutarate is bound at residue Arg-405. A disordered region spans residues 432-507 (EPLPLDLNRS…MPRPSRRNYG (76 aa)). Positions 440–450 (RSGSTSRFSRL) are enriched in polar residues. A compositionally biased stretch (basic residues) spans 497–507 (GMPRPSRRNYG).

This sequence belongs to the alkB family. (Microbial infection) Interacts with the capsid protein ORF3b of the alfalfa mosaic virus (AMV). It depends on Fe(2+) as a cofactor.

It localises to the cytoplasm. It is found in the P-body. The protein resides in the cytoplasmic granule. The catalysed reaction is an N(6)-methyladenosine in mRNA + 2-oxoglutarate + O2 = an adenosine in mRNA + formaldehyde + succinate + CO2. Dioxygenase that demethylates RNA by oxidative demethylation: specifically demethylates N(6)-methyladenosine (m6A) RNA, the most prevalent internal modification of messenger RNA (mRNA) in higher eukaryotes. Modulates viral infection of the alfalfa mosaic virus (AMV) and the m6A abundance in its genomic RNAs. This chain is RNA demethylase ALKBH9B, found in Arabidopsis thaliana (Mouse-ear cress).